The following is a 159-amino-acid chain: Cytochrome c-type biogenesis protein CcmE (159 aa).

Topologically, residues Met1–Arg7 are cytoplasmic. The helical; Signal-anchor for type II membrane protein transmembrane segment at Leu8–Ala28 threads the bilayer. The Periplasmic portion of the chain corresponds to Leu29–Ser159. Residues His121 and Tyr125 each coordinate heme. Residues Leu134–Ser159 form a disordered region.

The protein belongs to the CcmE/CycJ family.

It is found in the cell inner membrane. In terms of biological role, heme chaperone required for the biogenesis of c-type cytochromes. Transiently binds heme delivered by CcmC and transfers the heme to apo-cytochromes in a process facilitated by CcmF and CcmH. The chain is Cytochrome c-type biogenesis protein CcmE from Xanthobacter autotrophicus (strain ATCC BAA-1158 / Py2).